A 103-amino-acid chain; its full sequence is Small ribosomal subunit protein uS10 (103 aa).

Belongs to the universal ribosomal protein uS10 family. In terms of assembly, part of the 30S ribosomal subunit.

In terms of biological role, involved in the binding of tRNA to the ribosomes. This Dechloromonas aromatica (strain RCB) protein is Small ribosomal subunit protein uS10.